The sequence spans 197 residues: Peptide deformylase (197 aa).

The Fe cation site is built by Cys-106 and His-148. The active site involves Glu-149. His-152 contributes to the Fe cation binding site.

The protein belongs to the polypeptide deformylase family. Requires Fe(2+) as cofactor.

The catalysed reaction is N-terminal N-formyl-L-methionyl-[peptide] + H2O = N-terminal L-methionyl-[peptide] + formate. Removes the formyl group from the N-terminal Met of newly synthesized proteins. Requires at least a dipeptide for an efficient rate of reaction. N-terminal L-methionine is a prerequisite for activity but the enzyme has broad specificity at other positions. The protein is Peptide deformylase of Mycobacterium marinum (strain ATCC BAA-535 / M).